Reading from the N-terminus, the 387-residue chain is Diphthine methyltransferase (387 aa).

5 WD repeats span residues Asn62–Phe102, Glu119–Thr159, Pro195–Ser237, Ile241–Phe286, and Gly357–Val387.

The protein belongs to the DPH7 family. In terms of assembly, interacts with CAN1 and RTT10.

It localises to the cytoplasm. Its subcellular location is the endosome. It carries out the reaction diphthine methyl ester-[translation elongation factor 2] + H2O = diphthine-[translation elongation factor 2] + methanol + H(+). Its pathway is protein modification; peptidyl-diphthamide biosynthesis. In terms of biological role, catalyzes the demethylation of diphthine methyl ester to form diphthine, an intermediate in diphthamide biosynthesis, a post-translational modification of histidine which occurs in translation elongation factor 2 (EFT1 and EFT2). Also plays a role in the regulation of the retromer complex and is required for the recycling from endosomes of plasma membrane proteins like CAN1 and MUP1. Identified in a screen for mutants with decreased levels of rDNA transcription. This Saccharomyces cerevisiae (strain ATCC 204508 / S288c) (Baker's yeast) protein is Diphthine methyltransferase (RRT2).